The primary structure comprises 378 residues: UPF0284 protein MK0224 (378 aa).

The protein belongs to the UPF0284 family.

The protein is UPF0284 protein MK0224 of Methanopyrus kandleri (strain AV19 / DSM 6324 / JCM 9639 / NBRC 100938).